The following is a 621-amino-acid chain: Methionine--tRNA ligase (621 aa).

Residues 11 to 21 carry the 'HIGH' region motif; the sequence is PYANGPRHIGH. Zn(2+)-binding residues include cysteine 143, cysteine 146, cysteine 156, and cysteine 159. The short motif at 347 to 351 is the 'KMSKS' region element; the sequence is KFSSS. Serine 350 is an ATP binding site.

It belongs to the class-I aminoacyl-tRNA synthetase family. MetG type 1 subfamily. Monomer. The cofactor is Zn(2+).

Its subcellular location is the cytoplasm. It catalyses the reaction tRNA(Met) + L-methionine + ATP = L-methionyl-tRNA(Met) + AMP + diphosphate. Its function is as follows. Is required not only for elongation of protein synthesis but also for the initiation of all mRNA translation through initiator tRNA(fMet) aminoacylation. The sequence is that of Methionine--tRNA ligase from Bifidobacterium longum (strain NCC 2705).